Consider the following 990-residue polypeptide: MSNTQDSAVRRPSLAPEEYSVGWICAIPTELTAAMAMLDTLHGPLESQPKDDGNNYTLGSIGGHNVVIACLPRYGTNDAAVAGISMQRTFSNLRFGLMVGIGGGIPSADNDIRLGDIAVSLPSAQAGGVIQHDMGKKEDGGFRRTGFLNGPPTLLLTAIAKLRATRTLGKEIAEIVNEAFAEEDDEEWRFPEKEDDILFEDGNELDGNGAEGEHVVQRKERKSKNPTCFYGNISSGNSVIKSAKERRRLAEEEGVICVEMEAAGLMNFFNCMVIRGICDYADAHKHKKWQQYAAAVAAAYAKILLCIISPQALKPHRIVHFSVPFGQNSKFIGREEHLRQVLTALTPEEFERDCQRVAITGLGGVGKTRIALEAAFRIRDKHPDCSVFWISAVNVSSFDAGFLEICRQFKVPGINEDKADVKSLAKAYLSQETAGRWLLIIDSADDLDMLYKSVKESDGNGSSRSLAEYLPFSRKGSILFTTRNHKAATYQAGSNVVTVEEMIESDSLQLLETSLIEKGKGFIEDDAKKLVRHLTNLPLAIKQAAAFINQNKITISNYLEVYESSALSDQALIELLSIDFEDQGRYRSDQNPIISTWLISFLDIQKSNPLAARYLYIMSCVAQRGIPRCLLPPASKFDEIQAIGTLTAYAFITELEDQNSFDIHRLVQLAARNWLKTRGELFQRSGDALKQVSRIFPFFKHENRNICIAYLPHAQHVLTFQDFPEDSQESLRDLLHNIGEYYYRTGKYREAEEFYWRALELKKLALGEHHPDTIGSMNNLAVVYERHGEYAKAESLQRQTLELMKQVFGEGHPDTLGSMNNLALVYEQQGEYAEAEKLQQQTLELRKQALGEDHPSTLMSMNNLATIYEQQGEYAKAESLQRQTLELKQQTLGEDHPSTLASMNNLALVYEHQGEYAKAETLYQQTLKLRKQVLGESHPDTLQSMNNLAIVYRLQGKYIEAEGLQQQQQSQATLDEGRLSKPARKRRKKK.

The segment at 22-304 is purine nucleoside phosphorylase domain; that stretch reads GWICAIPTEL…AVAAAYAKIL (283 aa). The region spanning 334–563 is the NB-ARC domain; the sequence is REEHLRQVLT…TISNYLEVYE (230 aa). TPR repeat units follow at residues 732 to 765, 774 to 807, 816 to 849, 858 to 891, 900 to 933, and 942 to 975; these read RDLLHNIGEYYYRTGKYREAEEFYWRALELKKLA, IGSMNNLAVVYERHGEYAKAESLQRQTLELMKQV, LGSMNNLALVYEQQGEYAEAEKLQQQTLELRKQA, LMSMNNLATIYEQQGEYAKAESLQRQTLELKQQT, LASMNNLALVYEHQGEYAKAETLYQQTLKLRKQV, and LQSMNNLAIVYRLQGKYIEAEGLQQQQQSQATLD. The interval 965–990 is disordered; sequence QQQQQSQATLDEGRLSKPARKRRKKK. The segment covering 981 to 990 has biased composition (basic residues); the sequence is KPARKRRKKK.

It carries out the reaction ATP + H2O = D-ribose 5-triphosphate + adenine. The enzyme catalyses dATP + H2O = 2-deoxyribose 5-triphosphate + adenine. In terms of biological role, the N-terminal purine nucleoside phosphorylase (PNP) domain cleaves the N-glycosidic bond of ATP, and to a lesser extent dATP; has very weak activity on adenosine and deoxyadenosine and no activity on (d)ADP or (d)AMP. In Hyaloscypha variabilis (strain UAMH 11265 / GT02V1 / F) (Meliniomyces variabilis), this protein is Nucleotide-binding leucine-rich repeat (NLR)-like protein.